We begin with the raw amino-acid sequence, 981 residues long: MTEEVGQKLLESLSLFKLGDIGYARIECELLTTFLEEQLENNLDSLSIHELSTNLIRNRICCREFIESRPAKKWVFLIFRLARTLFRDKTRIATFHSVNLHSEFVQVFWRNLTYQTKSYRNCKFQTFQFIASRFLRSEHDWNVTVVNCLNVTQKLIDNGENARKFVDCNLEDAVLVLLATRQMTVLQHSLEILGRLSDWSTTCRENLCESNTIDVCLQLIPDGDILTQKLCISLLRILSCEEQAREQIRIYDGVPTLLGLLSIKNSRLQWHVAWTLAQLAEQHETSLEIAQLGGISLIFAAISNPKPPGKAVGDWVAMLTGLTALLAQLAQASSNQQLMSNANGVYILGKLLAIKKNVTTDETIDSWDLLQCSIFRVLRLMYTFERSRQLLKKVLPTEIFEKFVDVGNYNSVLTDYDQIAKMYDNLIEENIEIMKDWETVNERRQAVGEVGEYELLDQLGAGAFGCVYTVRKKAQSHSENPAKLLALKEIFMTNLNDRESDKSFGDMISEVKIIKQQLRHPNIVRYRRIFVENHRLYIVMDLIQGCSLRDLIITMKEKKGNFEEKKIWAMVVQMMLALRYLHKEKQIVHRDLKPNNIMMTTDERVVITDFGLAKQKGPEYLKSAAGTIIYSCPEIVQNLPYGEKADIWSFGCCIYEMCQLQPVFHSTNMLTLAMQIVEAKYDPLNEMWSDDLRFLITSCLAPDPSARPDILKVSGMCGVRLLEYLDDVARQQASTSDMTASQSSYNIKIDESPSSLNSSTSSYKRPGRSSKTSGSGKLPPINPAPRRNHSMSAGETPRPSSIVCLPRITDKYSVMFPSAPSAIPSRRRVQTCSTEHPARSSSSTELKVSKQSDGLTVSSNVLRQIQDPVLTILNQIHRILVVTDKETISTSMNHQRRLVEMFRKNLLGRENDAVQMKTHLRKLAAESPEEIQMNLGFSDFRPVLVQSHINGYQKDQKVTKITYEQLSACIECLIAENPAAK.

In terms of domain architecture, Protein kinase spans 453–725; the sequence is YELLDQLGAG…MCGVRLLEYL (273 aa). ATP-binding positions include 459–467 and Lys-488; that span reads LGAGAFGCV. The active-site Proton acceptor is the Asp-591. Polar residues predominate over residues 735-746; that stretch reads TSDMTASQSSYN. Disordered regions lie at residues 735–802 and 823–847; these read TSDM…PSSI and IPSR…TELK. Residues 752–762 show a composition bias toward low complexity; sequence SPSSLNSSTSS. Polar residues predominate over residues 830 to 847; it reads QTCSTEHPARSSSSTELK.

The protein belongs to the protein kinase superfamily. NEK Ser/Thr protein kinase family. NIMA subfamily. Mg(2+) serves as cofactor.

The enzyme catalyses L-seryl-[protein] + ATP = O-phospho-L-seryl-[protein] + ADP + H(+). It carries out the reaction L-threonyl-[protein] + ATP = O-phospho-L-threonyl-[protein] + ADP + H(+). The protein is Serine/threonine-protein kinase D1044.8 (nekl-4) of Caenorhabditis elegans.